The following is a 120-amino-acid chain: Aspartate 1-decarboxylase (120 aa).

The Schiff-base intermediate with substrate; via pyruvic acid role is filled by Ser-25. The residue at position 25 (Ser-25) is a Pyruvic acid (Ser). Position 57 (Thr-57) interacts with substrate. The active-site Proton donor is the Tyr-58. 73-75 (GAA) contacts substrate.

It belongs to the PanD family. Heterooctamer of four alpha and four beta subunits. The cofactor is pyruvate. In terms of processing, is synthesized initially as an inactive proenzyme, which is activated by self-cleavage at a specific serine bond to produce a beta-subunit with a hydroxyl group at its C-terminus and an alpha-subunit with a pyruvoyl group at its N-terminus.

It localises to the cytoplasm. It catalyses the reaction L-aspartate + H(+) = beta-alanine + CO2. It functions in the pathway cofactor biosynthesis; (R)-pantothenate biosynthesis; beta-alanine from L-aspartate: step 1/1. Its function is as follows. Catalyzes the pyruvoyl-dependent decarboxylation of aspartate to produce beta-alanine. The chain is Aspartate 1-decarboxylase from Cupriavidus necator (strain ATCC 17699 / DSM 428 / KCTC 22496 / NCIMB 10442 / H16 / Stanier 337) (Ralstonia eutropha).